Consider the following 213-residue polypeptide: Phosphatidylserine decarboxylase proenzyme (213 aa).

Ser183 serves as the catalytic Schiff-base intermediate with substrate; via pyruvic acid. Pyruvic acid (Ser); by autocatalysis is present on Ser183.

It belongs to the phosphatidylserine decarboxylase family. PSD-A subfamily. In terms of assembly, heterodimer of a large membrane-associated beta subunit and a small pyruvoyl-containing alpha subunit. Pyruvate serves as cofactor. Is synthesized initially as an inactive proenzyme. Formation of the active enzyme involves a self-maturation process in which the active site pyruvoyl group is generated from an internal serine residue via an autocatalytic post-translational modification. Two non-identical subunits are generated from the proenzyme in this reaction, and the pyruvate is formed at the N-terminus of the alpha chain, which is derived from the carboxyl end of the proenzyme. The post-translation cleavage follows an unusual pathway, termed non-hydrolytic serinolysis, in which the side chain hydroxyl group of the serine supplies its oxygen atom to form the C-terminus of the beta chain, while the remainder of the serine residue undergoes an oxidative deamination to produce ammonia and the pyruvoyl prosthetic group on the alpha chain.

The protein resides in the cell membrane. The enzyme catalyses a 1,2-diacyl-sn-glycero-3-phospho-L-serine + H(+) = a 1,2-diacyl-sn-glycero-3-phosphoethanolamine + CO2. Its pathway is phospholipid metabolism; phosphatidylethanolamine biosynthesis; phosphatidylethanolamine from CDP-diacylglycerol: step 2/2. Functionally, catalyzes the formation of phosphatidylethanolamine (PtdEtn) from phosphatidylserine (PtdSer). The chain is Phosphatidylserine decarboxylase proenzyme from Syntrophus aciditrophicus (strain SB).